The chain runs to 520 residues: MPLELTQSRVQKIWVPVDHRPSLPRSCGPKLTNSPTVIVMVGLPARGKTYISKKLTRYLNWIGVPTKVFNVGEYRREAVKQYSSYNFFRPDNEEAMKVRKQCALAALRDVKSYLAKEGGQIAVFDATNTTRERRHMILHFAKENDFKAFFIESVCDDPTVVASNIMEVKISSPDYKDCNSAEAMDDFMKRISCYEASYQPLDPDKCDRDLSLIKVIDVGRRFLVNRVQDHIQSRIVYYLMNIHVQPRTIYLCRHGENEHNLQGRIGGDSGLSSRGKKFASALSKFVEEQNLKDLRVWTSQLKSTIQTAEALRLPYEQWKALNEIDAGVCEELTYEEIRDTYPEEYALREQDKYYYRYPTGESYQDLVQRLEPVIMELERQENVLVICHQAVLRCLLAYFLDKSAEEMPYLKCPLHTVLKLTPVAYGCRVESIYLNVESVCTHRERSEDAKKGPNPLMRRNSVTPLASPEPTKKPRINSFEEHVASTSAALPSCLPPEVPTQLPGQNMKGSRSSADSSRKH.

Residues 1-245 (MPLELTQSRV…VYYLMNIHVQ (245 aa)) form a 6-phosphofructo-2-kinase region. 42–50 (GLPARGKTY) is an ATP binding site. 2 residues coordinate beta-D-fructose 6-phosphate: arginine 75 and arginine 99. Aspartate 125 is a catalytic residue. 2 residues coordinate beta-D-fructose 6-phosphate: threonine 127 and arginine 133. Cysteine 155 is an active-site residue. 164 to 169 (NIMEVK) contributes to the ATP binding site. 3 residues coordinate beta-D-fructose 6-phosphate: lysine 169, arginine 190, and tyrosine 194. A fructose-2,6-bisphosphatase region spans residues 246 to 520 (PRTIYLCRHG…RSSADSSRKH (275 aa)). Arginine 253 lines the beta-D-fructose 2,6-bisphosphate pocket. The Tele-phosphohistidine intermediate role is filled by histidine 254. Positions 260 and 266 each coordinate beta-D-fructose 2,6-bisphosphate. Residue glutamate 323 is the Proton donor/acceptor of the active site. Tyrosine 334, arginine 348, lysine 352, tyrosine 363, glutamine 389, and arginine 393 together coordinate beta-D-fructose 2,6-bisphosphate. 345-348 (YALR) serves as a coordination point for ATP. Residues 389–393 (QAVLR) and tyrosine 425 each bind ATP. Positions 443–520 (RERSEDAKKG…RSSADSSRKH (78 aa)) are disordered. Serine 461 carries the post-translational modification Phosphoserine; by AMPK. The residue at position 463 (threonine 463) is a Phosphothreonine. Serine 467 is modified (phosphoserine). A Phosphothreonine; by PKC modification is found at threonine 471. Residues 502-520 (LPGQNMKGSRSSADSSRKH) are compositionally biased toward polar residues.

In the C-terminal section; belongs to the phosphoglycerate mutase family. In terms of assembly, homodimer. Forms a heterodimer with PFKFB2. Phosphorylation by AMPK stimulates activity. In terms of tissue distribution, ubiquitous.

It catalyses the reaction beta-D-fructose 2,6-bisphosphate + H2O = beta-D-fructose 6-phosphate + phosphate. It carries out the reaction beta-D-fructose 6-phosphate + ATP = beta-D-fructose 2,6-bisphosphate + ADP + H(+). Its function is as follows. Catalyzes both the synthesis and degradation of fructose 2,6-bisphosphate. This is 6-phosphofructo-2-kinase/fructose-2,6-bisphosphatase 3 (PFKFB3) from Homo sapiens (Human).